Consider the following 387-residue polypeptide: GTP-binding protein 10 (387 aa).

Residues Gly-13–Ile-148 enclose the Obg domain. One can recognise an OBG-type G domain in the interval Ala-149–Asp-344. GTP is bound by residues Gly-155–Ser-162, Asp-202–Leu-206, and Asn-278–Asp-281.

The protein belongs to the TRAFAC class OBG-HflX-like GTPase superfamily. OBG GTPase family.

Its subcellular location is the nucleus. It localises to the nucleolus. The protein resides in the chromosome. May be involved in the ribosome maturation process. Complements an ObgE(CgtA) function in E.coli ribosome maturation. Plays a role of GTPase in vitro. When missing, disorganization of the nucleolar architecture is observed. In Homo sapiens (Human), this protein is GTP-binding protein 10 (GTPBP10).